A 250-amino-acid polypeptide reads, in one-letter code: Aminoglycoside 3'-phosphotransferase (250 aa).

The active-site Proton acceptor is the D178.

The protein belongs to the aminoglycoside phosphotransferase family.

It carries out the reaction kanamycin A + ATP = kanamycin 3'-phosphate + ADP + H(+). Functionally, resistance to kanamycin and structurally-related aminoglycosides, including amikacin. The polypeptide is Aminoglycoside 3'-phosphotransferase (aphA-7) (Campylobacter jejuni).